We begin with the raw amino-acid sequence, 487 residues long: MYIVMITPECAPIAKVGGLGDVVQGLSNELSIRGNTVELILPKYDCMRYERIWGLEKTHNNLWVPYHDQWIPCDVYFGFAEGLKCFFIEPHNGFFQRGTYYGQPDDPQRFAFFCKAALEFMLRSNKYPEIIHCHDWQTGLVPVLLFEQYKYLGMTHPRVCYTLHNMRHQGVTGGHILQQVGLDPAAYMTPERLLDHTYPHGVNLMKGGIVFSNFITTVSPRYLDEIRYTDQGYGLQHTLHEHSQKLGGILNGVDYKVWNPDIDPYIAARYNLKTLDKKYENKTALRHRLWLRDEYKPIVGVISRLDPQKGVELIRHALFYCLANGCQFVLLGASASNSINADFWYLKQYLNDDPDCHLEIGYDEDLAHQIYAGADMLIVPSIYEPCGLTQMIAMKYGTVPIVRHVGGLADTVFDANYAHKPYHERNGFVFHDFNHEGIEAALHRAIGLWYEYPQYFRELMENGMRYDFSWNHPGQHYLNIYHHIQEI.

Lys-15 is an ADP-alpha-D-glucose binding site.

The protein belongs to the glycosyltransferase 1 family. Bacterial/plant glycogen synthase subfamily.

It carries out the reaction [(1-&gt;4)-alpha-D-glucosyl](n) + ADP-alpha-D-glucose = [(1-&gt;4)-alpha-D-glucosyl](n+1) + ADP + H(+). It participates in glycan biosynthesis; glycogen biosynthesis. Functionally, synthesizes alpha-1,4-glucan chains using ADP-glucose. This Nitrosococcus oceani (strain ATCC 19707 / BCRC 17464 / JCM 30415 / NCIMB 11848 / C-107) protein is Glycogen synthase 1.